Reading from the N-terminus, the 397-residue chain is Putative efflux system protein YvrP (397 aa).

Residues 8 to 28 (LIGGAICAGVLVLAGIGAGGF) form a helical membrane-spanning segment. A coiled-coil region spans residues 106 to 183 (EDHSDEVEQA…KELAGLTKNK (78 aa)).

This sequence belongs to the membrane fusion protein (MFP) (TC 8.A.1) family.

It is found in the cell membrane. This Bacillus subtilis (strain 168) protein is Putative efflux system protein YvrP (yvrP).